A 661-amino-acid chain; its full sequence is Heme transporter BhuA (661 aa).

The N-terminal stretch at methionine 1–alanine 23 is a signal peptide. Positions lysine 48–valine 159 constitute a TBDR plug domain. The TBDR beta-barrel domain occupies threonine 170–phenylalanine 661.

The protein belongs to the TonB-dependent receptor family.

It is found in the cell outer membrane. Its function is as follows. Heme transporter. The sequence is that of Heme transporter BhuA (bhuA) from Brucella suis biovar 1 (strain 1330).